Here is a 779-residue protein sequence, read N- to C-terminus: Protein WEAK CHLOROPLAST MOVEMENT UNDER BLUE LIGHT-like 1 (779 aa).

The segment at 1-119 (MEDLKTTDAL…NAVSPRPLYS (119 aa)) is disordered. The span at 79–88 (DSPTTPSFVS) shows a compositional bias: polar residues. S139 bears the Phosphoserine mark. Coiled coils occupy residues 182–503 (RMKV…KQRE), 532–587 (KETR…ESRL), and 657–715 (AVSE…KWRE). Residues 650–661 (ANARVAAAVSEV) show a composition bias toward low complexity. Disordered stretches follow at residues 650-674 (ANAR…SLEK) and 694-759 (EKAE…NPVK). Composition is skewed to basic and acidic residues over residues 662-674 (GEAK…SLEK) and 694-718 (EKAE…EVSE). Over residues 741-753 (TSVSNETETNPIP) the composition is skewed to polar residues.

The protein belongs to the WEB family.

This Arabidopsis thaliana (Mouse-ear cress) protein is Protein WEAK CHLOROPLAST MOVEMENT UNDER BLUE LIGHT-like 1 (WEL1).